A 197-amino-acid polypeptide reads, in one-letter code: Molybdenum cofactor guanylyltransferase (197 aa).

Residues 10–12 (LAG), Lys23, Asp69, and Asp99 contribute to the GTP site. Residue Asp99 participates in Mg(2+) binding.

It belongs to the MobA family. In terms of assembly, monomer. It depends on Mg(2+) as a cofactor.

The protein resides in the cytoplasm. It catalyses the reaction Mo-molybdopterin + GTP + H(+) = Mo-molybdopterin guanine dinucleotide + diphosphate. In terms of biological role, transfers a GMP moiety from GTP to Mo-molybdopterin (Mo-MPT) cofactor (Moco or molybdenum cofactor) to form Mo-molybdopterin guanine dinucleotide (Mo-MGD) cofactor. In Serratia proteamaculans (strain 568), this protein is Molybdenum cofactor guanylyltransferase.